Consider the following 179-residue polypeptide: Large ribosomal subunit protein uL5 (179 aa).

It belongs to the universal ribosomal protein uL5 family. As to quaternary structure, part of the 50S ribosomal subunit; part of the 5S rRNA/L5/L18/L25 subcomplex. Contacts the 5S rRNA and the P site tRNA. Forms a bridge to the 30S subunit in the 70S ribosome.

This is one of the proteins that bind and probably mediate the attachment of the 5S RNA into the large ribosomal subunit, where it forms part of the central protuberance. In the 70S ribosome it contacts protein S13 of the 30S subunit (bridge B1b), connecting the 2 subunits; this bridge is implicated in subunit movement. Contacts the P site tRNA; the 5S rRNA and some of its associated proteins might help stabilize positioning of ribosome-bound tRNAs. The polypeptide is Large ribosomal subunit protein uL5 (Rickettsia africae (strain ESF-5)).